Reading from the N-terminus, the 230-residue chain is Large ribosomal subunit protein uL4 (230 aa).

The interval 59 to 113 (RQGTHATKTRGEVSGGGKKPYRQKGTGRARQGSTRAPQFTGGGTVHGPQPRDYSQ) is disordered.

The protein belongs to the universal ribosomal protein uL4 family. Part of the 50S ribosomal subunit.

One of the primary rRNA binding proteins, this protein initially binds near the 5'-end of the 23S rRNA. It is important during the early stages of 50S assembly. It makes multiple contacts with different domains of the 23S rRNA in the assembled 50S subunit and ribosome. Functionally, forms part of the polypeptide exit tunnel. The sequence is that of Large ribosomal subunit protein uL4 from Nocardia farcinica (strain IFM 10152).